The sequence spans 721 residues: Polyribonucleotide nucleotidyltransferase (721 aa).

Asp-495 and Asp-501 together coordinate Mg(2+). The KH domain occupies 562 to 621 (PRLLSFRIDPELIGTVIGPGGRTIKNITERTNTKIDIEDSGIVTIASHDGAAAEEAQKII). The 69-residue stretch at 631–699 (GEVFTGSITR…NRGRINLTLR (69 aa)) folds into the S1 motif domain. Positions 700–721 (GVPQSGESADSQPAPTPVAPLS) are disordered.

The protein belongs to the polyribonucleotide nucleotidyltransferase family. It depends on Mg(2+) as a cofactor.

Its subcellular location is the cytoplasm. The catalysed reaction is RNA(n+1) + phosphate = RNA(n) + a ribonucleoside 5'-diphosphate. In terms of biological role, involved in mRNA degradation. Catalyzes the phosphorolysis of single-stranded polyribonucleotides processively in the 3'- to 5'-direction. The chain is Polyribonucleotide nucleotidyltransferase from Synechococcus sp. (strain CC9311).